Here is a 138-residue protein sequence, read N- to C-terminus: Acidic phospholipase A2 inhibitor chain HPD-1I (138 aa).

Positions 1–16 (MRTLWIVAVCLIGVEG) are cleaved as a signal peptide. 7 cysteine pairs are disulfide-bonded: Cys-42–Cys-131, Cys-44–Cys-60, Cys-59–Cys-111, Cys-65–Cys-138, Cys-66–Cys-104, Cys-73–Cys-97, and Cys-91–Cys-102.

Heterodimer of an acidic and a basic chain; non-covalently linked. The basic chain is toxic and has phospholipase A2 activity (chain HDP-1P (AC Q1RP79) or HDP-2P (AC Q1RP78)) and the acidic chain is non-toxic and functions as its inhibitor (chain HPD-1I). In terms of tissue distribution, expressed by the venom gland.

The protein localises to the secreted. Functionally, heterodimer: slightly affects neuromuscular transmission acting presynaptically. It has a low catalytic activity, a low anticoagulant activity and weakly inhibits ADP-induced platelet aggregation. In terms of biological role, monomer: has no activity (neurotoxic, catalytic, anticoagulant and a ADP-induced platelet aggregation), but inhibits phospholipase A2. This chain is Acidic phospholipase A2 inhibitor chain HPD-1I, found in Vipera nikolskii (Nikolsky's adder).